Consider the following 291-residue polypeptide: 33 kDa chaperonin (291 aa).

2 cysteine pairs are disulfide-bonded: Cys237–Cys239 and Cys270–Cys273.

This sequence belongs to the HSP33 family. In terms of processing, under oxidizing conditions two disulfide bonds are formed involving the reactive cysteines. Under reducing conditions zinc is bound to the reactive cysteines and the protein is inactive.

Its subcellular location is the cytoplasm. Its function is as follows. Redox regulated molecular chaperone. Protects both thermally unfolding and oxidatively damaged proteins from irreversible aggregation. Plays an important role in the bacterial defense system toward oxidative stress. The sequence is that of 33 kDa chaperonin from Bacillus cereus (strain B4264).